The primary structure comprises 55 residues: Sec-independent protein translocase protein TatA (55 aa).

A helical membrane pass occupies residues 1–21; the sequence is MGMSFSHLLIVLLIIFVLFGA.

This sequence belongs to the TatA/E family. As to quaternary structure, the Tat system comprises two distinct complexes: a TatABC complex, containing multiple copies of TatA, TatB and TatC subunits, and a separate TatA complex, containing only TatA subunits. Substrates initially bind to the TatABC complex, which probably triggers association of the separate TatA complex to form the active translocon.

Its subcellular location is the cell inner membrane. Part of the twin-arginine translocation (Tat) system that transports large folded proteins containing a characteristic twin-arginine motif in their signal peptide across membranes. TatA could form the protein-conducting channel of the Tat system. The protein is Sec-independent protein translocase protein TatA of Rickettsia peacockii (strain Rustic).